Here is a 1134-residue protein sequence, read N- to C-terminus: Centrosomal protein of 131 kDa (1134 aa).

5 disordered regions span residues asparagine 111–glutamate 131, aspartate 168–leucine 208, glutamate 286–serine 306, valine 425–proline 455, and aspartate 492–arginine 528. Residues methionine 180 to valine 196 show a composition bias toward basic and acidic residues. Positions lysine 494 to leucine 504 are enriched in basic and acidic residues. Residues asparagine 513–lysine 522 show a composition bias toward polar residues. A coiled-coil region spans residues leucine 732–tyrosine 1131.

It belongs to the CEP131 family. Expressed in chordotonal (Ch) neuronal precursors. Expressed in ciliated cells, like sensory neurons and spermatids.

It localises to the cytoplasm. Its subcellular location is the cytoskeleton. The protein localises to the microtubule organizing center. The protein resides in the centrosome. It is found in the cilium basal body. It localises to the centriole. Cilium-specific protein with a role in cilium/flagellum formation. May be involved in transport of components into the growing cilium. In germ cells and sensory neurons, plays a role with Cby in the building of the transition zone necessary for the formation of the ciliary cap and for the correct elongation of the axoneme. The sequence is that of Centrosomal protein of 131 kDa from Drosophila melanogaster (Fruit fly).